We begin with the raw amino-acid sequence, 380 residues long: Erythronate-4-phosphate dehydrogenase (380 aa).

Substrate is bound by residues serine 45 and threonine 66. Residues aspartate 146 and threonine 174 each coordinate NAD(+). Arginine 207 is an active-site residue. Aspartate 231 provides a ligand contact to NAD(+). Residue glutamate 236 is part of the active site. Histidine 253 acts as the Proton donor in catalysis. An NAD(+)-binding site is contributed by glycine 256. Tyrosine 257 contributes to the substrate binding site.

The protein belongs to the D-isomer specific 2-hydroxyacid dehydrogenase family. PdxB subfamily. As to quaternary structure, homodimer.

The protein resides in the cytoplasm. It carries out the reaction 4-phospho-D-erythronate + NAD(+) = (R)-3-hydroxy-2-oxo-4-phosphooxybutanoate + NADH + H(+). It functions in the pathway cofactor biosynthesis; pyridoxine 5'-phosphate biosynthesis; pyridoxine 5'-phosphate from D-erythrose 4-phosphate: step 2/5. In terms of biological role, catalyzes the oxidation of erythronate-4-phosphate to 3-hydroxy-2-oxo-4-phosphonooxybutanoate. The polypeptide is Erythronate-4-phosphate dehydrogenase (Pseudomonas fluorescens (strain Pf0-1)).